A 385-amino-acid polypeptide reads, in one-letter code: Sensor histidine kinase Hik2 (385 aa).

The 121-residue stretch at 11–131 (ALCRTQLELV…QQVAQTLAIA (121 aa)) folds into the GAF domain. Cysteine 13 contributes to the [3Fe-4S] cluster binding site. Positions 142–270 (SHSPAQPLDQ…PQLPPIWLEE (129 aa)) are DHp domain, may sense NaCl. The Histidine kinase domain occupies 158 to 381 (DLLHQLRNPV…AFTLAIPWQM (224 aa)). The residue at position 161 (histidine 161) is a Phosphohistidine; by autocatalysis.

Belongs to the chloroplast sensor kinase protein family. Hexamers; upon treatment with 0.5 M NaCl only tetramers are seen. The tetramers are probably inactive. Requires [3Fe-4S] cluster as cofactor. Post-translationally, autophosphorylates, possibly on His-161.

It catalyses the reaction ATP + protein L-histidine = ADP + protein N-phospho-L-histidine.. In terms of biological role, member of 2 two-component regulatory system(s) Hik2/Rre1 and Hik2/RppA. Transduces PQ (plastoquinone) redox signals to photosystem gene expression machinery during the adjustment of photosystem stoichiometry. Reduced PQ suppresses its autophosphorylation activity (i.e. kinase activity is higher under oxidizing conditions). As part of a two-component regulatory system with Rre1, controls expression of sigB and several other genes in response to hyperosmotic stress. May transfer phosphate to RppA in a possible Hik2/RppA two-component system. The polypeptide is Sensor histidine kinase Hik2 (Thermosynechococcus vestitus (strain NIES-2133 / IAM M-273 / BP-1)).